We begin with the raw amino-acid sequence, 596 residues long: Elongation factor 4 (596 aa).

In terms of domain architecture, tr-type G spans 2-184 (KHIRNFSIIA…VIVEQIPPPE (183 aa)). Residues 14–19 (DHGKST) and 131–134 (NKID) each bind GTP.

The protein belongs to the TRAFAC class translation factor GTPase superfamily. Classic translation factor GTPase family. LepA subfamily.

The protein resides in the cell inner membrane. It catalyses the reaction GTP + H2O = GDP + phosphate + H(+). In terms of biological role, required for accurate and efficient protein synthesis under certain stress conditions. May act as a fidelity factor of the translation reaction, by catalyzing a one-codon backward translocation of tRNAs on improperly translocated ribosomes. Back-translocation proceeds from a post-translocation (POST) complex to a pre-translocation (PRE) complex, thus giving elongation factor G a second chance to translocate the tRNAs correctly. Binds to ribosomes in a GTP-dependent manner. The sequence is that of Elongation factor 4 from Shewanella oneidensis (strain ATCC 700550 / JCM 31522 / CIP 106686 / LMG 19005 / NCIMB 14063 / MR-1).